The sequence spans 196 residues: Lipoprotein signal peptidase (196 aa).

A run of 3 helical transmembrane segments spans residues 43-63 (LMLK…GISF), 75-95 (AVFI…MVCS), and 100-120 (GFAG…DRLF). Residues aspartate 126 and aspartate 144 contribute to the active site. Residues 135 to 155 (YSFPVFNLADCFITIGVIILI) form a helical membrane-spanning segment.

The protein belongs to the peptidase A8 family.

The protein resides in the cell inner membrane. It catalyses the reaction Release of signal peptides from bacterial membrane prolipoproteins. Hydrolyzes -Xaa-Yaa-Zaa-|-(S,diacylglyceryl)Cys-, in which Xaa is hydrophobic (preferably Leu), and Yaa (Ala or Ser) and Zaa (Gly or Ala) have small, neutral side chains.. It functions in the pathway protein modification; lipoprotein biosynthesis (signal peptide cleavage). Functionally, this protein specifically catalyzes the removal of signal peptides from prolipoproteins. The sequence is that of Lipoprotein signal peptidase from Rickettsia canadensis (strain McKiel).